The chain runs to 545 residues: Chromosomal replication initiator protein DnaA (545 aa).

The domain I, interacts with DnaA modulators stretch occupies residues 1-72 (MNDFWQHCSA…DMARDFWQAP (72 aa)). The interval 72–208 (PVDVQFVLDP…GETDSMYERS (137 aa)) is domain II. Over residues 90–105 (AAAPAPASARPASAPG) the composition is skewed to low complexity. Disordered regions lie at residues 90–112 (AAAPAPASARPASAPGSMGGSAG) and 181–204 (AAARRTWRPGQSASSNGNGETDSM). The segment covering 189–201 (PGQSASSNGNGET) has biased composition (polar residues). Residues 209–425 (KLNPVLTFDN…GALRKILAYS (217 aa)) form a domain III, AAA+ region region. The ATP site is built by Gly-253, Gly-255, Lys-256, and Thr-257. The interval 426–545 (KFHGREITIE…LHVLEQTLKG (120 aa)) is domain IV, binds dsDNA.

This sequence belongs to the DnaA family. As to quaternary structure, oligomerizes as a right-handed, spiral filament on DNA at oriC.

It localises to the cytoplasm. Plays an essential role in the initiation and regulation of chromosomal replication. ATP-DnaA binds to the origin of replication (oriC) to initiate formation of the DNA replication initiation complex once per cell cycle. Binds the DnaA box (a 9 base pair repeat at the origin) and separates the double-stranded (ds)DNA. Forms a right-handed helical filament on oriC DNA; dsDNA binds to the exterior of the filament while single-stranded (ss)DNA is stabiized in the filament's interior. The ATP-DnaA-oriC complex binds and stabilizes one strand of the AT-rich DNA unwinding element (DUE), permitting loading of DNA polymerase. After initiation quickly degrades to an ADP-DnaA complex that is not apt for DNA replication. Binds acidic phospholipids. The sequence is that of Chromosomal replication initiator protein DnaA from Paraburkholderia phytofirmans (strain DSM 17436 / LMG 22146 / PsJN) (Burkholderia phytofirmans).